The following is a 289-amino-acid chain: Polyamine aminopropyltransferase (289 aa).

The PABS domain occupies 5 to 245 (PGPIVLVEPL…YAVNYILGSL (241 aa)). Q36 contacts S-methyl-5'-thioadenosine. Positions 67 and 91 each coordinate spermidine. S-methyl-5'-thioadenosine is bound by residues D111 and 143–144 (DG). The active-site Proton acceptor is the D164.

This sequence belongs to the spermidine/spermine synthase family. As to quaternary structure, homodimer or homotetramer.

The protein localises to the cytoplasm. The catalysed reaction is S-adenosyl 3-(methylsulfanyl)propylamine + putrescine = S-methyl-5'-thioadenosine + spermidine + H(+). Its pathway is amine and polyamine biosynthesis; spermidine biosynthesis; spermidine from putrescine: step 1/1. In terms of biological role, catalyzes the irreversible transfer of a propylamine group from the amino donor S-adenosylmethioninamine (decarboxy-AdoMet) to putrescine (1,4-diaminobutane) to yield spermidine. This Pyrobaculum arsenaticum (strain DSM 13514 / JCM 11321 / PZ6) protein is Polyamine aminopropyltransferase.